The chain runs to 123 residues: Small ribosomal subunit protein uS13 (123 aa).

The disordered stretch occupies residues 95 to 123 (GLPVRGQKTKTNARTRKGPKKAVASKKKK).

The protein belongs to the universal ribosomal protein uS13 family. Part of the 30S ribosomal subunit. Forms a loose heterodimer with protein S19. Forms two bridges to the 50S subunit in the 70S ribosome.

Its function is as follows. Located at the top of the head of the 30S subunit, it contacts several helices of the 16S rRNA. In the 70S ribosome it contacts the 23S rRNA (bridge B1a) and protein L5 of the 50S subunit (bridge B1b), connecting the 2 subunits; these bridges are implicated in subunit movement. Contacts the tRNAs in the A and P-sites. This chain is Small ribosomal subunit protein uS13, found in Clostridium acetobutylicum (strain ATCC 824 / DSM 792 / JCM 1419 / IAM 19013 / LMG 5710 / NBRC 13948 / NRRL B-527 / VKM B-1787 / 2291 / W).